A 958-amino-acid polypeptide reads, in one-letter code: Dermatan-sulfate epimerase (958 aa).

Residues 1-22 form the signal peptide; it reads MRTHTRGAPSVFFIYLLCFVSA. The Lumenal portion of the chain corresponds to 23-902; sequence YITDENPEVM…APSLSASYTR (880 aa). Residue Asn183 is glycosylated (N-linked (GlcNAc...) (complex) asparagine). His205 acts as the Proton donor in catalysis. Tyr261 is an active-site residue. Asn336 carries N-linked (GlcNAc...) (high mannose) asparagine glycosylation. Residue Asn411 is glycosylated (N-linked (GlcNAc...) (complex) asparagine). Positions 452 and 470 each coordinate Mn(2+). Tyr473 is a catalytic residue. Position 481 (Asn481) interacts with Mn(2+). N-linked (GlcNAc...) (complex) asparagine glycosylation is present at Asn642. Asn648 is a glycosylation site (N-linked (GlcNAc...) (paucimannose) asparagine). The helical transmembrane segment at 903–923 threads the bilayer; the sequence is LFLILNIAIFFVMLAMQLTYF. At 924–933 the chain is on the cytoplasmic side; sequence QRAQSLHGQR. Residues 934–954 form a helical membrane-spanning segment; sequence CLYAVLLIDSCILLWLYSSCS. The Lumenal segment spans residues 955 to 958; it reads QSQC.

It belongs to the dermatan-sulfate isomerase family. The cofactor is Mn(2+). N-glycosylated. Glycosylation is important for enzymatic activity. Ubiquitously expressed with higher expression in kidney and ovary and lower expression in brain, colon and thymus. Also expressed in renal cell carcinomas, brain tumors, and in a part of melanomas and adenocarcinomas from organs other than the breast. Expressed in squamous cell carcinomas (SCC), glioma, and some adenocarcinoma cell lines, but not in breast cancer cell lines or any normal tissues (at protein level).

Its subcellular location is the endoplasmic reticulum membrane. It is found in the golgi apparatus membrane. The protein resides in the cytoplasmic vesicle membrane. The protein localises to the microsome membrane. The catalysed reaction is chondroitin 4'-sulfate = dermatan 4'-sulfate. It functions in the pathway glycan metabolism; chondroitin sulfate biosynthesis. It participates in glycan metabolism; heparan sulfate biosynthesis. Converts D-glucuronic acid to L-iduronic acid (IdoUA) residues. Plays an important role in the biosynthesis of the glycosaminoglycan/mucopolysaccharide dermatan sulfate. This Homo sapiens (Human) protein is Dermatan-sulfate epimerase (DSE).